The following is a 281-amino-acid chain: Cytochrome bc1 complex cytochrome c subunit (281 aa).

Residues 17–37 form a helical membrane-spanning segment; that stretch reads AAGAMALAVGLTGAGILVNAV. Cytochrome c domains follow at residues 52 to 132 and 162 to 240; these read ALIQ…EANG and ADVA…KSAK. The heme c site is built by cysteine 65, cysteine 68, histidine 69, cysteine 175, cysteine 178, and histidine 179. The helical transmembrane segment at 259–279 threads the bilayer; sequence GMMMWLVGIVVLVAAAMWIGS.

In terms of assembly, the cytochrome bc1 complex is composed of a cytochrome b (QcrB), the Rieske iron-sulfur protein (QcrA) and a diheme cytochrome c (QcrC) subunit. The bc1 complex forms a supercomplex with cytochrome c oxidase (cytochrome aa3). Post-translationally, binds 2 heme c groups covalently per subunit.

The protein localises to the cell membrane. It catalyses the reaction a quinol + 2 Fe(III)-[cytochrome c](out) = a quinone + 2 Fe(II)-[cytochrome c](out) + 2 H(+)(out). Its function is as follows. Cytochrome c1 subunit of the cytochrome bc1 complex, an essential component of the respiratory electron transport chain required for ATP synthesis. The bc1 complex catalyzes the oxidation of menaquinol and the reduction of cytochrome c in the respiratory chain. The bc1 complex operates through a Q-cycle mechanism that couples electron transfer to generation of the proton gradient that drives ATP synthesis. This chain is Cytochrome bc1 complex cytochrome c subunit (qcrC), found in Corynebacterium diphtheriae (strain ATCC 700971 / NCTC 13129 / Biotype gravis).